Reading from the N-terminus, the 361-residue chain is Histidinol-phosphate aminotransferase (361 aa).

A disordered region spans residues 26–45 (GMDPEDLTKLSSNENPHGPS). The residue at position 222 (Lys-222) is an N6-(pyridoxal phosphate)lysine.

This sequence belongs to the class-II pyridoxal-phosphate-dependent aminotransferase family. Histidinol-phosphate aminotransferase subfamily. The cofactor is pyridoxal 5'-phosphate.

It carries out the reaction L-histidinol phosphate + 2-oxoglutarate = 3-(imidazol-4-yl)-2-oxopropyl phosphate + L-glutamate. Its pathway is amino-acid biosynthesis; L-histidine biosynthesis; L-histidine from 5-phospho-alpha-D-ribose 1-diphosphate: step 7/9. In Haloferax volcanii (strain ATCC 29605 / DSM 3757 / JCM 8879 / NBRC 14742 / NCIMB 2012 / VKM B-1768 / DS2) (Halobacterium volcanii), this protein is Histidinol-phosphate aminotransferase (hisC).